The primary structure comprises 156 residues: Cyanate hydratase (156 aa).

Active-site residues include Arg-96, Glu-99, and Ser-122.

This sequence belongs to the cyanase family.

The enzyme catalyses cyanate + hydrogencarbonate + 3 H(+) = NH4(+) + 2 CO2. In terms of biological role, catalyzes the reaction of cyanate with bicarbonate to produce ammonia and carbon dioxide. The protein is Cyanate hydratase of Burkholderia ambifaria (strain MC40-6).